We begin with the raw amino-acid sequence, 535 residues long: CTP synthase (535 aa).

An amidoligase domain region spans residues 1-267; it reads MTKYIFVTGG…DQIVCDHLKL (267 aa). Residue Ser-13 coordinates CTP. Ser-13 serves as a coordination point for UTP. Position 14–19 (14–19) interacts with ATP; the sequence is SLGKGI. An L-glutamine-binding site is contributed by Tyr-54. Asp-71 provides a ligand contact to ATP. 2 residues coordinate Mg(2+): Asp-71 and Glu-141. Residues 148 to 150, 188 to 193, and Lys-224 contribute to the CTP site; these read DIE and KTKPTQ. UTP-binding positions include 188-193 and Lys-224; that span reads KTKPTQ. 240 to 242 lines the ATP pocket; the sequence is RDA. The region spanning 292–534 is the Glutamine amidotransferase type-1 domain; sequence KIALVGKYVE…VRASITNKES (243 aa). An L-glutamine-binding site is contributed by Gly-354. Cys-381 serves as the catalytic Nucleophile; for glutamine hydrolysis. L-glutamine is bound by residues 382 to 385, Glu-405, and Arg-462; that span reads LGMQ. Catalysis depends on residues His-507 and Glu-509.

This sequence belongs to the CTP synthase family. Homotetramer.

The enzyme catalyses UTP + L-glutamine + ATP + H2O = CTP + L-glutamate + ADP + phosphate + 2 H(+). The catalysed reaction is L-glutamine + H2O = L-glutamate + NH4(+). It carries out the reaction UTP + NH4(+) + ATP = CTP + ADP + phosphate + 2 H(+). Its pathway is pyrimidine metabolism; CTP biosynthesis via de novo pathway; CTP from UDP: step 2/2. Its activity is regulated as follows. Allosterically activated by GTP, when glutamine is the substrate; GTP has no effect on the reaction when ammonia is the substrate. The allosteric effector GTP functions by stabilizing the protein conformation that binds the tetrahedral intermediate(s) formed during glutamine hydrolysis. Inhibited by the product CTP, via allosteric rather than competitive inhibition. Functionally, catalyzes the ATP-dependent amination of UTP to CTP with either L-glutamine or ammonia as the source of nitrogen. Regulates intracellular CTP levels through interactions with the four ribonucleotide triphosphates. The chain is CTP synthase from Bacillus cereus (strain ATCC 14579 / DSM 31 / CCUG 7414 / JCM 2152 / NBRC 15305 / NCIMB 9373 / NCTC 2599 / NRRL B-3711).